The chain runs to 396 residues: Glyceraldehyde-3-phosphate dehydrogenase GAPA1, chloroplastic (396 aa).

The transit peptide at 1-60 directs the protein to the chloroplast; sequence MASVTFSVPKGFTEFSGLRSSSASLPFGKKLSSDEFVSIVSFQTSAMGSSGGYRKGVTEA. NADP(+) contacts are provided by residues 71-72, aspartate 95, and arginine 140; that span reads RI. D-glyceraldehyde 3-phosphate contacts are provided by residues 212–214, threonine 243, arginine 258, 271–272, and arginine 294; these read SCT and TG. Residue cysteine 213 is the Nucleophile of the active site. An NADP(+)-binding site is contributed by asparagine 376.

This sequence belongs to the glyceraldehyde-3-phosphate dehydrogenase family. As to quaternary structure, tetramer of either four A chains (GAPDH 2) or two A and two B chains (GAPDH 1). In terms of tissue distribution, expressed in leaves and stems.

It localises to the plastid. The protein resides in the chloroplast membrane. The protein localises to the chloroplast stroma. The enzyme catalyses D-glyceraldehyde 3-phosphate + phosphate + NADP(+) = (2R)-3-phospho-glyceroyl phosphate + NADPH + H(+). Its pathway is carbohydrate biosynthesis; Calvin cycle. Involved in the photosynthetic reductive pentose phosphate pathway (Calvin-Benson cycle). Catalyzes the reduction of 1,3-diphosphoglycerate by NADPH. In Arabidopsis thaliana (Mouse-ear cress), this protein is Glyceraldehyde-3-phosphate dehydrogenase GAPA1, chloroplastic (GAPA1).